A 152-amino-acid chain; its full sequence is Endoribonuclease YbeY (152 aa).

Zn(2+) contacts are provided by H118, H122, and H128.

Belongs to the endoribonuclease YbeY family. Zn(2+) is required as a cofactor.

It localises to the cytoplasm. In terms of biological role, single strand-specific metallo-endoribonuclease involved in late-stage 70S ribosome quality control and in maturation of the 3' terminus of the 16S rRNA. This is Endoribonuclease YbeY from Lacticaseibacillus paracasei (strain ATCC 334 / BCRC 17002 / CCUG 31169 / CIP 107868 / KCTC 3260 / NRRL B-441) (Lactobacillus paracasei).